The primary structure comprises 587 residues: Pyruvate decarboxylase 3 (587 aa).

D48 and H135 together coordinate substrate. The tract at residues 415-496 is thiamine pyrophosphate binding; that stretch reads DSWFNCQKLR…FLINNGGYTI (82 aa). Residues D464, N491, and G493 each contribute to the Mg(2+) site. E497 is a substrate binding site.

This sequence belongs to the TPP enzyme family. As to quaternary structure, homotetramer. Requires a metal cation as cofactor. It depends on thiamine diphosphate as a cofactor.

It catalyses the reaction a 2-oxocarboxylate + H(+) = an aldehyde + CO2. This chain is Pyruvate decarboxylase 3 (PDC3), found in Oryza sativa subsp. indica (Rice).